The sequence spans 176 residues: Ribosome rescue factor SmrB (176 aa).

The 76-residue stretch at 93–168 folds into the Smr domain; that stretch reads LDLHGYRQSE…GDAALLVLID (76 aa).

The protein belongs to the SmrB family. As to quaternary structure, associates with collided ribosomes, but not with correctly translating polysomes.

Acts as a ribosome collision sensor. Detects stalled/collided disomes (pairs of ribosomes where the leading ribosome is stalled and a second ribosome has collided with it) and endonucleolytically cleaves mRNA at the 5' boundary of the stalled ribosome. Stalled/collided disomes form a new interface (primarily via the 30S subunits) that binds SmrB. Cleaved mRNA becomes available for tmRNA ligation, leading to ribosomal subunit dissociation and rescue of stalled ribosomes. This is Ribosome rescue factor SmrB from Shewanella oneidensis (strain ATCC 700550 / JCM 31522 / CIP 106686 / LMG 19005 / NCIMB 14063 / MR-1).